We begin with the raw amino-acid sequence, 176 residues long: MKASGTLREYKVVGRLLPSVKNPTPPLYRMRIFAPNHVVAKSRFWYFVSQLRKMKKANGETVYCGLVHEKTPLKVKNFGVWLRNDSRSGTHNMYREYRDLTTSAAVTQCYRDMGARHRARAHSIHIMKVQEIAANKCRRPAIKQFHDSKIKFPLPHRVLRRQHNPRFTTKRPNTFF.

It belongs to the eukaryotic ribosomal protein eL20 family. As to quaternary structure, component of the large ribosomal subunit.

The protein resides in the cytoplasm. Its function is as follows. Component of the large ribosomal subunit. The ribosome is a large ribonucleoprotein complex responsible for the synthesis of proteins in the cell. In Salmo salar (Atlantic salmon), this protein is Large ribosomal subunit protein eL20 (rpl18a).